The chain runs to 374 residues: Guanine nucleotide-binding protein subunit alpha-15 (374 aa).

Residues 41–374 form the G-alpha domain; it reads GELKLLLLGP…ARYLDEINLL (334 aa). A G1 motif region spans residues 44–57; sequence KLLLLGPGESGKST. Residues 49–56, 183–189, 208–212, 277–280, and Ala-346 contribute to the GTP site; these read GPGESGKS, LRSRMPT, DAGGQ, and NKTD. Residues Ser-56 and Thr-189 each coordinate Mg(2+). The segment at 181 to 189 is G2 motif; sequence DVLRSRMPT. The segment at 204–213 is G3 motif; sequence LRIVDAGGQK. A G4 motif region spans residues 273 to 280; it reads ILFLNKTD. The G5 motif stretch occupies residues 344-349; it reads TCATDT.

It belongs to the G-alpha family. G(q) subfamily. As to quaternary structure, g proteins are composed of 3 units; alpha, beta and gamma. The alpha chain contains the guanine nucleotide binding site.

Its function is as follows. Guanine nucleotide-binding proteins (G proteins) are involved as modulators or transducers in various transmembrane signaling systems. The sequence is that of Guanine nucleotide-binding protein subunit alpha-15 (Gna15) from Rattus norvegicus (Rat).